Reading from the N-terminus, the 939-residue chain is Protein translocase subunit SecA (939 aa).

ATP-binding positions include glutamine 85, 103-107 (GEGKT), and aspartate 504. Residues 850–939 (PVQDGAERPS…KGGGGRRRKK (90 aa)) form a disordered region. A compositionally biased stretch (basic and acidic residues) spans 854–864 (GAERPSLEKEG). Positions 924 to 939 (ERRKAQKGGGGRRRKK) are enriched in basic residues.

Belongs to the SecA family. Monomer and homodimer. Part of the essential Sec protein translocation apparatus which comprises SecA, SecYEG and auxiliary proteins SecDF. Other proteins may also be involved.

It localises to the cell membrane. The protein resides in the cytoplasm. It carries out the reaction ATP + H2O + cellular proteinSide 1 = ADP + phosphate + cellular proteinSide 2.. Part of the Sec protein translocase complex. Interacts with the SecYEG preprotein conducting channel. Has a central role in coupling the hydrolysis of ATP to the transfer of proteins into and across the cell membrane, serving as an ATP-driven molecular motor driving the stepwise translocation of polypeptide chains across the membrane. This is Protein translocase subunit SecA from Streptomyces griseus subsp. griseus (strain JCM 4626 / CBS 651.72 / NBRC 13350 / KCC S-0626 / ISP 5235).